We begin with the raw amino-acid sequence, 474 residues long: MDKPRVRFAPSPTGYLHIGGARTALFNWLWARRNGGTFVLRIEDTDRERSTQLAVDAILDGLRWLGLDWDEGPGVGGPHPPYFQTERLDLYKAHAERLIREGKAYACYCTREELDAQRKQAEAEKRQFRYPGTCRDEPYDPSRPHVVRFRVPDAGATSWNDLVKGVISTPHDTLQDEVILRGDGVPLYNFGAVVDDITMEINLVGRGDDHVNNTARQILMYEALGYPVPTFAHFPMILGADKARLSKRHGATSVTAYRDLGFLPQAVVNYLVRLGWSHGDQELFTLDELVRYFDLKDVGATAGVFNLEKMAWVNHEWLKRLSPEELAKLALPHFRAAGLPAEDDEKLRHVCAVARERAKTLGEYVQQFRYFYAPIALDPKAKAKFLTADTRPVLQAVRDAIAALPALETQAVEQVFHGEAERRGVGLGKVAQPARVALTGGTASPGMYDVVQILGKDETLRRLDEAIRVAGQPG.

The 'HIGH' region motif lies at 10–20; that stretch reads PSPTGYLHIGG. 4 residues coordinate Zn(2+): cysteine 107, cysteine 109, cysteine 134, and aspartate 136. Residues 244–248 carry the 'KMSKS' region motif; the sequence is RLSKR. Position 247 (lysine 247) interacts with ATP.

Belongs to the class-I aminoacyl-tRNA synthetase family. Glutamate--tRNA ligase type 1 subfamily. Monomer. Zn(2+) serves as cofactor.

It is found in the cytoplasm. The enzyme catalyses tRNA(Glu) + L-glutamate + ATP = L-glutamyl-tRNA(Glu) + AMP + diphosphate. Its function is as follows. Catalyzes the attachment of glutamate to tRNA(Glu) in a two-step reaction: glutamate is first activated by ATP to form Glu-AMP and then transferred to the acceptor end of tRNA(Glu). The chain is Glutamate--tRNA ligase from Anaeromyxobacter dehalogenans (strain 2CP-C).